The chain runs to 504 residues: Xylose import ATP-binding protein XylG (504 aa).

ABC transporter domains lie at 6-243 and 262-504; these read LEMQ…VGRE and VRNF…TGGK. 38–45 is an ATP binding site; that stretch reads GENGAGKS.

It belongs to the ABC transporter superfamily. Xylose importer (TC 3.A.1.2.4) family. The complex is composed of two ATP-binding proteins (XylG), two transmembrane proteins (XylH) and a solute-binding protein (XylF).

It localises to the cell membrane. The catalysed reaction is D-xylose(out) + ATP + H2O = D-xylose(in) + ADP + phosphate + H(+). Its function is as follows. Part of the ABC transporter complex XylFGH involved in xylose import. Responsible for energy coupling to the transport system. The chain is Xylose import ATP-binding protein XylG from Moorella thermoacetica (strain ATCC 39073 / JCM 9320).